A 291-amino-acid chain; its full sequence is Ribosomal RNA small subunit methyltransferase A (291 aa).

Residues H37, L39, G64, E85, D110, and N131 each coordinate S-adenosyl-L-methionine.

It belongs to the class I-like SAM-binding methyltransferase superfamily. rRNA adenine N(6)-methyltransferase family. RsmA subfamily.

It localises to the cytoplasm. It catalyses the reaction adenosine(1518)/adenosine(1519) in 16S rRNA + 4 S-adenosyl-L-methionine = N(6)-dimethyladenosine(1518)/N(6)-dimethyladenosine(1519) in 16S rRNA + 4 S-adenosyl-L-homocysteine + 4 H(+). Specifically dimethylates two adjacent adenosines (A1518 and A1519) in the loop of a conserved hairpin near the 3'-end of 16S rRNA in the 30S particle. May play a critical role in biogenesis of 30S subunits. The chain is Ribosomal RNA small subunit methyltransferase A from Dehalococcoides mccartyi (strain ATCC BAA-2266 / KCTC 15142 / 195) (Dehalococcoides ethenogenes (strain 195)).